The chain runs to 146 residues: Superoxide dismutase [Mn] 2 (146 aa).

H42, D126, and H130 together coordinate Mn(2+).

It belongs to the iron/manganese superoxide dismutase family. Mn(2+) serves as cofactor.

The enzyme catalyses 2 superoxide + 2 H(+) = H2O2 + O2. Destroys superoxide anion radicals which are normally produced within the cells and which are toxic to biological systems. The protein is Superoxide dismutase [Mn] 2 (sod2) of Haloferax mediterranei (Halobacterium mediterranei).